A 73-amino-acid polypeptide reads, in one-letter code: Homeodomain-only protein (73 aa).

Positions 3 to 62 (AETASGPTEDQVEILEYNFNKVDKHPDSTTLCLIAAEAGLSEEETQKWFKQRLAKWRRSE) form a DNA-binding region, homeobox; degenerate.

As to quaternary structure, interacts with serum response factor (SRF). Component of a large complex containing histone deacetylases such as HDAC2. Interacts with the acetylated forms of HSPA1A and HSPA1B. Interacts with HSPA8. As to expression, widely expressed. Expressed in the heart, brain, placenta, lung, skeletal and smooth muscles, uterus, urinary bladder, kidney and spleen. Down-regulated in some types of cancer such as lung cancer, choriocarcinoma, head and neck squamous cell carcinoma and oral squamous cell carcinoma.

The protein resides in the nucleus. The protein localises to the cytoplasm. Functionally, atypical homeodomain protein which does not bind DNA and is required to modulate cardiac growth and development. Acts via its interaction with SRF, thereby modulating the expression of SRF-dependent cardiac-specific genes and cardiac development. Prevents SRF-dependent transcription either by inhibiting SRF binding to DNA or by recruiting histone deacetylase (HDAC) proteins that prevent transcription by SRF. Overexpression causes cardiac hypertrophy. May act as a tumor suppressor. Acts as a co-chaperone for HSPA1A and HSPA1B chaperone proteins and assists in chaperone-mediated protein refolding. The protein is Homeodomain-only protein (HOPX) of Homo sapiens (Human).